The sequence spans 148 residues: 3-dehydroquinate dehydratase (148 aa).

Tyr-23 serves as the catalytic Proton acceptor. Substrate-binding residues include Asn-75, His-81, and Asp-88. Catalysis depends on His-101, which acts as the Proton donor. Substrate-binding positions include Leu-102–Ser-103 and Arg-112.

It belongs to the type-II 3-dehydroquinase family. Homododecamer.

The catalysed reaction is 3-dehydroquinate = 3-dehydroshikimate + H2O. The protein operates within metabolic intermediate biosynthesis; chorismate biosynthesis; chorismate from D-erythrose 4-phosphate and phosphoenolpyruvate: step 3/7. Functionally, catalyzes a trans-dehydration via an enolate intermediate. This chain is 3-dehydroquinate dehydratase, found in Halorhodospira halophila (strain DSM 244 / SL1) (Ectothiorhodospira halophila (strain DSM 244 / SL1)).